A 243-amino-acid polypeptide reads, in one-letter code: Adenosine 5'-phosphosulfate reductase (243 aa).

This sequence belongs to the PAPS reductase family. CysH subfamily. It depends on [4Fe-4S] cluster as a cofactor.

Its subcellular location is the cytoplasm. It catalyses the reaction [thioredoxin]-disulfide + sulfite + AMP + 2 H(+) = adenosine 5'-phosphosulfate + [thioredoxin]-dithiol. The protein operates within sulfur metabolism; hydrogen sulfide biosynthesis; sulfite from sulfate. Its function is as follows. Catalyzes the formation of sulfite from adenosine 5'-phosphosulfate (APS) using thioredoxin as an electron donor. This Staphylococcus haemolyticus (strain JCSC1435) protein is Adenosine 5'-phosphosulfate reductase.